A 182-amino-acid polypeptide reads, in one-letter code: Auxin-responsive protein IAA9 (182 aa).

Positions 1-41 are disordered; sequence MELELGLAPPNSGHLVVDELSSSSSSGGGSGSAPVSASSAG. Positions 3–7 match the EAR-like (transcriptional repression) motif; it reads LELGL. Residues 32 to 41 are compositionally biased toward low complexity; that stretch reads SAPVSASSAG. Positions 92–182 constitute a PB1 domain; it reads ANYVKVKKEG…RSVKRLKILG (91 aa).

It belongs to the Aux/IAA family. In terms of assembly, homodimers and heterodimers. As to expression, expressed in etiolated shoots and flowers.

Its subcellular location is the nucleus. Aux/IAA proteins are short-lived transcriptional factors that function as repressors of early auxin response genes at low auxin concentrations. This Oryza sativa subsp. japonica (Rice) protein is Auxin-responsive protein IAA9 (IAA9).